We begin with the raw amino-acid sequence, 734 residues long: Protein arginine N-methyltransferase 5 (734 aa).

Residues 1–16 (MSNRTYADNLFPQQVA) are compositionally biased toward polar residues. The segment at 1 to 39 (MSNRTYADNLFPQQVAEQHEEQMSSGSSPKSNSPSRSIS) is disordered. Over residues 24–39 (SSGSSPKSNSPSRSIS) the composition is skewed to low complexity. The TIM barrel stretch occupies residues 42–329 (EAANSRIHIG…EYSQALRHAV (288 aa)). Residues 360–706 (LQAPLQPLSE…VDNTGVWYEW (347 aa)) enclose the SAM-dependent MTase PRMT-type domain. Tyrosine 376 provides a ligand contact to S-adenosyl-L-methionine. Phenylalanine 379 is a binding site for a protein. Residues 385-386 (KY), glutamate 450, and 477-478 (DM) contribute to the S-adenosyl-L-methionine site. Positions 499 and 508 each coordinate a protein. Active-site proton donor/acceptor residues include glutamate 499 and glutamate 508. The tract at residues 529–734 (PQKYTSYVKP…PNGESYYMRM (206 aa)) is beta barrel. Positions 541-589 (STHIHQTIKAQSIPYLSRAIPSHGRGEPELDEDEMWIQKYPQGHVRNNM) are dimerization.

It belongs to the class I-like SAM-binding methyltransferase superfamily. Protein arginine N-methyltransferase family. In terms of assembly, homodimer. Interacts with cep-1 (via C-terminus domain); does not methylate cep-1. Interacts with cbp-1 (via N-terminus domain and HAT domain); the interaction results in methylation of cbp-1. Component of a complex that contains cep-1 and cbp-1. May interact with pid-2, pid-4 and pid-5.

The protein localises to the nucleus. The enzyme catalyses L-arginyl-[protein] + 2 S-adenosyl-L-methionine = N(omega),N(omega)'-dimethyl-L-arginyl-[protein] + 2 S-adenosyl-L-homocysteine + 2 H(+). In terms of biological role, catalyzes the symmetrical dimethylation of arginine residues in targets such as small nuclear ribonucleoproteins, histone H2A/H4 and cbp-1. Dimethylation occurs in a distributive manner where the protein is released after the addition of the first methyl group prior to rebinding for the addition of the second methyl group. Plays a role in the negative regulation of DNA damage-induced apoptosis. By methylating cbp-1, may prevent apoptosis by repressing the capacity of cbp-1 to enhance cep-1 dependent transcription activation of the programmed cell death activator egl-1. Plays a role in heat and oxidative stress resistance. The chain is Protein arginine N-methyltransferase 5 from Caenorhabditis elegans.